The primary structure comprises 1122 residues: Phytochrome A (1122 aa).

Residues 1–11 (MSGSRPTQSSE) show a composition bias toward polar residues. Residues 1 to 21 (MSGSRPTQSSEGSRRSRHSAR) form a disordered region. The GAF domain maps to 218-402 (SMERLCDTMV…VFAIHVNKEV (185 aa)). Cys323 contributes to the phytochromobilin binding site. Residues 618-688 (VTSEMVRLIE…RMLENALEGT (71 aa)) form the PAS 1 domain. In terms of domain architecture, PAC spans 695–747 (FEIKTHLSRADAGPISLVVNACASRDLHENVVGVCFVAHDLTGQKTVMDKFTR). The region spanning 748–822 (IEGDYKAIIQ…KNQEAFVNLG (75 aa)) is the PAS 2 domain. In terms of domain architecture, Histidine kinase spans 902–1119 (YIKRQIRNPL…SFIITAELAA (218 aa)).

Belongs to the phytochrome family. In terms of assembly, homodimer. Interacts with NDPK2 and PKS4. Stabilized by interactions with PAPP5 and FYPP3 which are enhanced in the phosphorylated Pfr form. Interacts with COP1/SPA1 complex. Binds, via its photosensory domain, to PTAC12/HMR when photoactivated; this interaction stimulates its localization to photobodies. Interacts with FHY1, FHL and FHY3, especially upon far-red (FR) light illumination; when underphosphorylated. Forms PHYA/FHY1/HFR1 complex. Binds to PIF3/PAP3. In terms of processing, phosphorylated. Contains one covalently linked phytochromobilin chromophore. Expressed in fruits, flowers, leaves, stems, seedlings and roots.

It is found in the cytoplasm. Its subcellular location is the nucleus. The protein resides in the nucleoplasm. The protein localises to the nucleus speckle. In terms of biological role, regulatory photoreceptor which exists in two forms that are reversibly interconvertible by light: the Pr form that absorbs maximally in the red region of the spectrum and the Pfr form that absorbs maximally in the far-red region. Photoconversion of Pr to Pfr induces an array of morphogenetic responses, whereas reconversion of Pfr to Pr cancels the induction of those responses. Pfr controls the expression of a number of nuclear genes including those encoding the small subunit of ribulose-bisphosphate carboxylase, chlorophyll A/B binding protein, protochlorophyllide reductase, rRNA, etc. It also controls the expression of its own gene(s) in a negative feedback fashion. Involved in the flowering time regulation. Can phosphorylate FHY1 and, possibly, FHL, in red light conditions; this inactivates their co-shuttling to the nucleus. Regulates phototropic responses both in the nucleus (e.g. hypocotyl elongation and cotyledon opening under high-irradiance conditions and seed germination under very-low-fluence conditions) and in the cytoplasm (e.g. negative gravitropism in blue light and red-enhanced phototropism). Promotes seed germination, suppression of hypocotyl elongation, and randomization of hypocotyl growth orientation in far-red light; these responses to far-red light are repressed by UNE10/PIF8. Stabilizes UNE10/PIF8 but sequesters PIF3/PAP3 from its target genes promoters in far-red light. The protein is Phytochrome A of Arabidopsis thaliana (Mouse-ear cress).